The chain runs to 365 residues: Solute carrier family 35 member G1 (365 aa).

The disordered stretch occupies residues 1 to 33 (MRPQDSTGVAELQEPGLPLTDDAPPGATEEPAA). Residues 23-33 (APPGATEEPAA) show a composition bias toward low complexity. The next 10 membrane-spanning stretches (helical) occupy residues 69–89 (GLGL…SLFV), 97–117 (AVEI…PCLI), 131–151 (IFLI…YYAY), 156–176 (LADA…FAWI), 187–207 (ALFT…PFLF), 222–242 (LKGT…LVIL), 252–272 (FLSI…ILSV), 286–306 (LFLI…TKAL), 311–333 (AGPV…IIFF), and 338–357 (TWWT…GAAI). 2 consecutive EamA domains span residues 80 to 202 (FLFS…LIVR) and 233 to 357 (VFAA…GAAI).

The protein belongs to the TMEM20 family. As to quaternary structure, interacts with STIM1; stimulated by depletion of intracellular calcium. Interacts with ORAI1. Interacts with the plasma membrane calcium-transporting ATPases ATP2B1 and ATP2B4. Interacts with ATP1A1, ATP2A2, KPNB1 and XPO1. In terms of tissue distribution, ubiquitously expressed.

The protein resides in the cell membrane. Its subcellular location is the endoplasmic reticulum membrane. Functionally, may play a role in intracellular calcium sensing and homeostasis. May act as a negative regulator of plasma membrane calcium-transporting ATPases preventing calcium efflux from the cell. The sequence is that of Solute carrier family 35 member G1 (SLC35G1) from Homo sapiens (Human).